The following is a 356-amino-acid chain: Alanine racemase (356 aa).

The Proton acceptor; specific for D-alanine role is filled by Lys35. An N6-(pyridoxal phosphate)lysine modification is found at Lys35. Arg130 is a substrate binding site. Tyr253 (proton acceptor; specific for L-alanine) is an active-site residue. Position 301 (Met301) interacts with substrate.

The protein belongs to the alanine racemase family. Requires pyridoxal 5'-phosphate as cofactor.

The enzyme catalyses L-alanine = D-alanine. It functions in the pathway amino-acid biosynthesis; D-alanine biosynthesis; D-alanine from L-alanine: step 1/1. In terms of biological role, catalyzes the interconversion of L-alanine and D-alanine. May also act on other amino acids. The sequence is that of Alanine racemase (alr) from Sodalis glossinidius (strain morsitans).